The primary structure comprises 246 residues: 3-deoxy-manno-octulosonate cytidylyltransferase (246 aa).

Belongs to the KdsB family.

It is found in the cytoplasm. It catalyses the reaction 3-deoxy-alpha-D-manno-oct-2-ulosonate + CTP = CMP-3-deoxy-beta-D-manno-octulosonate + diphosphate. It functions in the pathway nucleotide-sugar biosynthesis; CMP-3-deoxy-D-manno-octulosonate biosynthesis; CMP-3-deoxy-D-manno-octulosonate from 3-deoxy-D-manno-octulosonate and CTP: step 1/1. Its pathway is bacterial outer membrane biogenesis; lipopolysaccharide biosynthesis. Functionally, activates KDO (a required 8-carbon sugar) for incorporation into bacterial lipopolysaccharide in Gram-negative bacteria. The protein is 3-deoxy-manno-octulosonate cytidylyltransferase of Rickettsia akari (strain Hartford).